A 119-amino-acid polypeptide reads, in one-letter code: Large ribosomal subunit protein bL19 (119 aa).

This sequence belongs to the bacterial ribosomal protein bL19 family.

In terms of biological role, this protein is located at the 30S-50S ribosomal subunit interface and may play a role in the structure and function of the aminoacyl-tRNA binding site. This chain is Large ribosomal subunit protein bL19, found in Pediococcus pentosaceus (strain ATCC 25745 / CCUG 21536 / LMG 10740 / 183-1w).